A 231-amino-acid polypeptide reads, in one-letter code: Endonuclease NucS (231 aa).

This sequence belongs to the NucS endonuclease family.

It localises to the cytoplasm. In terms of biological role, cleaves both 3' and 5' ssDNA extremities of branched DNA structures. The sequence is that of Endonuclease NucS from Pseudarthrobacter chlorophenolicus (strain ATCC 700700 / DSM 12829 / CIP 107037 / JCM 12360 / KCTC 9906 / NCIMB 13794 / A6) (Arthrobacter chlorophenolicus).